Reading from the N-terminus, the 320-residue chain is Lipoyl synthase (320 aa).

Positions 67, 72, 78, 93, 97, 100, and 307 each coordinate [4Fe-4S] cluster. Residues 79 to 296 enclose the Radical SAM core domain; the sequence is FNHGTATFMI…RDKAQAMGFE (218 aa).

This sequence belongs to the radical SAM superfamily. Lipoyl synthase family. Requires [4Fe-4S] cluster as cofactor.

The protein localises to the cytoplasm. It catalyses the reaction [[Fe-S] cluster scaffold protein carrying a second [4Fe-4S](2+) cluster] + N(6)-octanoyl-L-lysyl-[protein] + 2 oxidized [2Fe-2S]-[ferredoxin] + 2 S-adenosyl-L-methionine + 4 H(+) = [[Fe-S] cluster scaffold protein] + N(6)-[(R)-dihydrolipoyl]-L-lysyl-[protein] + 4 Fe(3+) + 2 hydrogen sulfide + 2 5'-deoxyadenosine + 2 L-methionine + 2 reduced [2Fe-2S]-[ferredoxin]. It participates in protein modification; protein lipoylation via endogenous pathway; protein N(6)-(lipoyl)lysine from octanoyl-[acyl-carrier-protein]: step 2/2. Functionally, catalyzes the radical-mediated insertion of two sulfur atoms into the C-6 and C-8 positions of the octanoyl moiety bound to the lipoyl domains of lipoate-dependent enzymes, thereby converting the octanoylated domains into lipoylated derivatives. This chain is Lipoyl synthase, found in Pasteurella multocida (strain Pm70).